The primary structure comprises 89 residues: UPF0175 protein ssl1255 (89 aa).

This sequence belongs to the UPF0175 family.

The sequence is that of UPF0175 protein ssl1255 from Synechocystis sp. (strain ATCC 27184 / PCC 6803 / Kazusa).